We begin with the raw amino-acid sequence, 122 residues long: Small ribosomal subunit protein uS13 (122 aa).

Residues 97 to 122 (PVRGQRTHTNARTRKGPARAIAGKKK) form a disordered region.

This sequence belongs to the universal ribosomal protein uS13 family. In terms of assembly, part of the 30S ribosomal subunit. Forms a loose heterodimer with protein S19. Forms two bridges to the 50S subunit in the 70S ribosome.

Located at the top of the head of the 30S subunit, it contacts several helices of the 16S rRNA. In the 70S ribosome it contacts the 23S rRNA (bridge B1a) and protein L5 of the 50S subunit (bridge B1b), connecting the 2 subunits; these bridges are implicated in subunit movement. Contacts the tRNAs in the A and P-sites. In Bartonella bacilliformis (strain ATCC 35685 / KC583 / Herrer 020/F12,63), this protein is Small ribosomal subunit protein uS13.